The chain runs to 1003 residues: Cytosolic carboxypeptidase 3 (1003 aa).

Residues Met-1–Glu-23 form a disordered region. The region spanning Tyr-299 to Cys-570 is the Peptidase M14 domain. Zn(2+)-binding residues include His-364, Glu-367, and His-460. The Proton donor/acceptor role is filled by Glu-534. Disordered stretches follow at residues Lys-642 to Glu-662 and Lys-911 to Thr-1003. Residues Glu-649–Glu-662 show a composition bias toward basic and acidic residues. The segment covering Pro-922–Thr-934 has biased composition (basic residues). Positions Ala-963 to Pro-976 are enriched in polar residues.

It belongs to the peptidase M14 family. The cofactor is Zn(2+).

Its subcellular location is the cytoplasm. The protein resides in the cytosol. It carries out the reaction (L-glutamyl)(n+1)-gamma-L-glutamyl-L-glutamyl-[protein] + H2O = (L-glutamyl)(n)-gamma-L-glutamyl-L-glutamyl-[protein] + L-glutamate. Metallocarboxypeptidase that mediates deglutamylation of tubulin and non-tubulin target proteins. Catalyzes the removal of polyglutamate side chains present on the gamma-carboxyl group of glutamate residues within the C-terminal tail of tubulin protein. Specifically cleaves tubulin long-side-chains, while it is not able to remove the branching point glutamate. Also catalyzes the removal of polyglutamate residues from the carboxy-terminus of non-tubulin proteins such as MYLK. May catalyze the hydrolysis of aspartate from the carboxy-terminus of target proteins. Does not show detyrosinase or deglycylase activities from the carboxy-terminus of target proteins. The chain is Cytosolic carboxypeptidase 3 (AGBL3) from Bos taurus (Bovine).